The primary structure comprises 162 residues: Cyclic pyranopterin monophosphate synthase (162 aa).

Substrate-binding positions include 75-77 (MCH) and 115-116 (ME). Residue D130 is part of the active site.

This sequence belongs to the MoaC family. In terms of assembly, homohexamer; trimer of dimers.

The catalysed reaction is (8S)-3',8-cyclo-7,8-dihydroguanosine 5'-triphosphate = cyclic pyranopterin phosphate + diphosphate. It participates in cofactor biosynthesis; molybdopterin biosynthesis. Catalyzes the conversion of (8S)-3',8-cyclo-7,8-dihydroguanosine 5'-triphosphate to cyclic pyranopterin monophosphate (cPMP). The chain is Cyclic pyranopterin monophosphate synthase from Geobacillus kaustophilus (strain HTA426).